We begin with the raw amino-acid sequence, 318 residues long: NADH-ubiquinone oxidoreductase chain 1 (318 aa).

A run of 8 helical transmembrane segments spans residues 3–23 (TMNL…LTLV), 69–89 (ILYI…WTPL), 98–118 (FNLG…SILW), 135–155 (AVAQ…SILL), 171–191 (HLWL…STLA), 217–237 (AGPF…MNAL), 253–273 (ELFT…FLWI), and 294–314 (LPLT…ISSI).

This sequence belongs to the complex I subunit 1 family. Core subunit of respiratory chain NADH dehydrogenase (Complex I) which is composed of 45 different subunits.

Its subcellular location is the mitochondrion inner membrane. It catalyses the reaction a ubiquinone + NADH + 5 H(+)(in) = a ubiquinol + NAD(+) + 4 H(+)(out). Functionally, core subunit of the mitochondrial membrane respiratory chain NADH dehydrogenase (Complex I) which catalyzes electron transfer from NADH through the respiratory chain, using ubiquinone as an electron acceptor. Essential for the catalytic activity and assembly of complex I. The chain is NADH-ubiquinone oxidoreductase chain 1 (MT-ND1) from Papio hamadryas (Hamadryas baboon).